The primary structure comprises 277 residues: MNQPSGNKLPHVTTRRMLDMKERGEKIAMLTAYDYTMARILDRSGVDAILVGDSASNVFAGHSTTLPMTVDEMIYHAKAVVRGVQAETRRAMVIVDMPFMSYQLSPEDAVRNAGKIMKEHECDAVKMEGGKVIAEAVKRITDIGIPVMGHLGLMPQSIYKYGSYKVRAMEEEEARQLIEDAKIIEEAGAFAIVLEKIPSKLAGEVSRLLTIPTIGIGAGPECDGQVLVINDMLGLSTDFRPRFVRRYADLSSVIEQAVKSYVEDVRSNSFPSEDESY.

2 residues coordinate Mg(2+): Asp53 and Asp96. 3-methyl-2-oxobutanoate is bound by residues 53–54 (DS), Asp96, and Lys126. Mg(2+) is bound at residue Glu128. Glu195 acts as the Proton acceptor in catalysis.

This sequence belongs to the PanB family. Homodecamer; pentamer of dimers. Mg(2+) is required as a cofactor.

Its subcellular location is the cytoplasm. The enzyme catalyses 3-methyl-2-oxobutanoate + (6R)-5,10-methylene-5,6,7,8-tetrahydrofolate + H2O = 2-dehydropantoate + (6S)-5,6,7,8-tetrahydrofolate. It functions in the pathway cofactor biosynthesis; (R)-pantothenate biosynthesis; (R)-pantoate from 3-methyl-2-oxobutanoate: step 1/2. In terms of biological role, catalyzes the reversible reaction in which hydroxymethyl group from 5,10-methylenetetrahydrofolate is transferred onto alpha-ketoisovalerate to form ketopantoate. This Chlorobaculum tepidum (strain ATCC 49652 / DSM 12025 / NBRC 103806 / TLS) (Chlorobium tepidum) protein is 3-methyl-2-oxobutanoate hydroxymethyltransferase.